The following is a 347-amino-acid chain: MSDNKREQRKNEHVEIAMAQGDATISDFDEIRFVHHSIPSVDVDDIDLTSQLKDFTLDQPLYINAMTGGSEWTKQINEKLAVIARETGIAMAVGSTHAALRNSKMASSFSIVRDTNPNGIIFSNVGADVPVDKAVESVKLLDAQALQVHVNAPQELVMPEGNRTFSTWMENLAQIVSRVDVPVIVKEVGFGMSKETIKSLNEIGVRYVDVSGRGGTNFVDIENERRTYKDMDYLGLWGQTTVESLLESASYQQDMDILASGGVRTPLDAVKCLALGASAVGMSRPFLNQVENYGITETLNYTEQFTDHMKKIMTMLDVKTIKDLKQTQMVFSPKLQSWIEQRGLDIR.

Residue 9–10 (RK) coordinates substrate. Residues 65-67 (AMT), Ser95, and Asn124 each bind FMN. 95–97 (STH) is a substrate binding site. Gln154 contributes to the substrate binding site. A Mg(2+)-binding site is contributed by Glu155. FMN-binding positions include Lys186, Ser211, Thr216, 262-264 (GVR), and 283-284 (SR).

The protein belongs to the IPP isomerase type 2 family. Homooctamer. Dimer of tetramers. FMN serves as cofactor. It depends on NADPH as a cofactor. Requires Mg(2+) as cofactor.

Its subcellular location is the cytoplasm. It catalyses the reaction isopentenyl diphosphate = dimethylallyl diphosphate. In terms of biological role, involved in the biosynthesis of isoprenoids. Catalyzes the 1,3-allylic rearrangement of the homoallylic substrate isopentenyl (IPP) to its allylic isomer, dimethylallyl diphosphate (DMAPP). The sequence is that of Isopentenyl-diphosphate delta-isomerase from Staphylococcus saprophyticus subsp. saprophyticus (strain ATCC 15305 / DSM 20229 / NCIMB 8711 / NCTC 7292 / S-41).